The sequence spans 248 residues: ATP synthase subunit a, chloroplastic (248 aa).

Helical transmembrane passes span 37–57 (AQVL…AVLA), 96–116 (VPFI…GALF), 135–155 (INTT…AGLH), 200–220 (LVVA…MMFL), and 221–241 (GLFT…AYIG).

This sequence belongs to the ATPase A chain family. In terms of assembly, F-type ATPases have 2 components, CF(1) - the catalytic core - and CF(0) - the membrane proton channel. CF(1) has five subunits: alpha(3), beta(3), gamma(1), delta(1), epsilon(1). CF(0) has four main subunits: a, b, b' and c.

The protein localises to the plastid. It is found in the chloroplast thylakoid membrane. In terms of biological role, key component of the proton channel; it plays a direct role in the translocation of protons across the membrane. The sequence is that of ATP synthase subunit a, chloroplastic from Marchantia polymorpha (Common liverwort).